A 171-amino-acid polypeptide reads, in one-letter code: uncharacterized protein (171 aa).

Belongs to the mimivirus L87/L94 family.

This is an uncharacterized protein from Acanthamoeba polyphaga (Amoeba).